Reading from the N-terminus, the 311-residue chain is Ribose-phosphate pyrophosphokinase (311 aa).

Residues Asp37 to Glu39 and Arg96 to Gln97 each bind ATP. The Mg(2+) site is built by His130 and Asp170. Residue Lys193 is part of the active site. Residues Arg195, Asp219, and Asp223 to Thr227 contribute to the D-ribose 5-phosphate site.

This sequence belongs to the ribose-phosphate pyrophosphokinase family. Class I subfamily. Homohexamer. Mg(2+) is required as a cofactor.

The protein localises to the cytoplasm. The enzyme catalyses D-ribose 5-phosphate + ATP = 5-phospho-alpha-D-ribose 1-diphosphate + AMP + H(+). It participates in metabolic intermediate biosynthesis; 5-phospho-alpha-D-ribose 1-diphosphate biosynthesis; 5-phospho-alpha-D-ribose 1-diphosphate from D-ribose 5-phosphate (route I): step 1/1. In terms of biological role, involved in the biosynthesis of the central metabolite phospho-alpha-D-ribosyl-1-pyrophosphate (PRPP) via the transfer of pyrophosphoryl group from ATP to 1-hydroxyl of ribose-5-phosphate (Rib-5-P). The polypeptide is Ribose-phosphate pyrophosphokinase (Aquifex aeolicus (strain VF5)).